Reading from the N-terminus, the 374-residue chain is Glutamate 5-kinase (374 aa).

Lysine 9 is a binding site for ATP. Residues serine 49, aspartate 136, and asparagine 148 each contribute to the substrate site. Residues threonine 168 to aspartate 169 and threonine 210 to lysine 216 each bind ATP. Residues serine 276–valine 354 form the PUA domain.

It belongs to the glutamate 5-kinase family.

The protein localises to the cytoplasm. It carries out the reaction L-glutamate + ATP = L-glutamyl 5-phosphate + ADP. Its pathway is amino-acid biosynthesis; L-proline biosynthesis; L-glutamate 5-semialdehyde from L-glutamate: step 1/2. In terms of biological role, catalyzes the transfer of a phosphate group to glutamate to form L-glutamate 5-phosphate. In Halalkalibacterium halodurans (strain ATCC BAA-125 / DSM 18197 / FERM 7344 / JCM 9153 / C-125) (Bacillus halodurans), this protein is Glutamate 5-kinase.